Consider the following 151-residue polypeptide: UPAR/Ly6 domain-containing protein rtv (151 aa).

The signal sequence occupies residues M1 to I19. Residues D20 to S125 are Extracellular-facing. Disulfide bonds link C26-C65, C29-C38, C60-C88, C100-C113, and C115-C120. N-linked (GlcNAc...) asparagine glycosylation is present at N45. A lipid anchor (GPI-anchor amidated asparagine) is attached at N121. Positions G122–N151 are cleaved as a propeptide — removed in mature form. Residues W126–L146 traverse the membrane as a helical segment. Topologically, residues Q147–N151 are cytoplasmic.

It belongs to the quiver family.

Its subcellular location is the cell membrane. Its function is as follows. Required for chitin fiber assembly and organization involved in cuticle formation and tracheal development. This Drosophila melanogaster (Fruit fly) protein is UPAR/Ly6 domain-containing protein rtv.